The sequence spans 502 residues: Polyadenylate-binding protein, cytoplasmic and nuclear (502 aa).

RRM domains follow at residues 14–90 (LTIY…KKDE), 96–176 (GNIF…LYNP), 191–275 (TNCF…KGQR), and 299–376 (KNLY…YFKN).

It belongs to the polyadenylate-binding protein type-1 family.

It is found in the cytoplasm. The protein resides in the nucleus. Binds the poly(A) tail of mRNA. Appears to be an important mediator of the multiple roles of the poly(A) tail in mRNA biogenesis, stability and translation. The sequence is that of Polyadenylate-binding protein, cytoplasmic and nuclear (PAB1) from Encephalitozoon cuniculi (strain GB-M1) (Microsporidian parasite).